The sequence spans 659 residues: Tetratricopeptide repeat protein 30 homolog (659 aa).

7 TPR repeats span residues 3-36, 43-76, 143-176, 178-210, 391-424, 450-483, and 533-566; these read SQNMLIRDGEYTKSIYTMIKEERFQEAINVLNGI, RAGLSLLGHCYYQTQDFIEASNCYEYLVNLVPDV, ATVKNDEGCLLFQANMFEDALQRYVSALQAGGFN, HIAYNAALCHYRKKENSQALNYIAEIVERGIRN, CRSAPDQNALRVALREYEFALESYLPVAMARAWI, TWRLHAAHVLFMRGDRYKEAAAFYEPIVRQNYDD, and CIVNLVIGTLYCAKGNYEFGLSRIAHALDGGSGA.

Belongs to the TTC30/dfy-1/fleer family.

It localises to the cell projection. Its subcellular location is the cilium. Required for polyglutamylation of axonemal tubulin in sensory cilia. Plays a role in anterograde intraflagellar transport (IFT), the process by which cilia precursors are transported from the base of the cilium to the site of their incorporation at the tip. The polypeptide is Tetratricopeptide repeat protein 30 homolog (Aedes aegypti (Yellowfever mosquito)).